Here is a 214-residue protein sequence, read N- to C-terminus: Adenylate kinase (214 aa).

10 to 15 (GVGKGT) lines the ATP pocket. The segment at 30–59 (STGDILRAAVKELTPMGAKAKGYMDSGALV) is NMP. Residues Thr31, Arg36, 57 to 59 (ALV), 85 to 88 (GFPR), and Gln92 contribute to the AMP site. The tract at residues 126 to 163 (GRRACANCGAGYHVDFAPSKVAGVCDACSGQLVQREDD) is LID. Arg127 provides a ligand contact to ATP. Cys130, Cys133, Cys150, and Cys153 together coordinate Zn(2+). Positions 160 and 171 each coordinate AMP. ATP is bound at residue Gly199.

It belongs to the adenylate kinase family. Monomer.

It is found in the cytoplasm. The catalysed reaction is AMP + ATP = 2 ADP. It participates in purine metabolism; AMP biosynthesis via salvage pathway; AMP from ADP: step 1/1. In terms of biological role, catalyzes the reversible transfer of the terminal phosphate group between ATP and AMP. Plays an important role in cellular energy homeostasis and in adenine nucleotide metabolism. The polypeptide is Adenylate kinase (Citrifermentans bemidjiense (strain ATCC BAA-1014 / DSM 16622 / JCM 12645 / Bem) (Geobacter bemidjiensis)).